Here is a 286-residue protein sequence, read N- to C-terminus: Elongation factor Ts (286 aa).

Residues 79–82 form an involved in Mg(2+) ion dislocation from EF-Tu region; sequence TDFV.

The protein belongs to the EF-Ts family.

It localises to the cytoplasm. Associates with the EF-Tu.GDP complex and induces the exchange of GDP to GTP. It remains bound to the aminoacyl-tRNA.EF-Tu.GTP complex up to the GTP hydrolysis stage on the ribosome. This chain is Elongation factor Ts, found in Wolbachia sp. subsp. Drosophila simulans (strain wRi).